Here is a 512-residue protein sequence, read N- to C-terminus: Ribose import ATP-binding protein RbsA 1 (512 aa).

ABC transporter domains are found at residues 8-244 (FRME…IGRE) and 257-502 (PEEK…LNIG). 40 to 47 (GENGAGKS) lines the ATP pocket.

It belongs to the ABC transporter superfamily. Ribose importer (TC 3.A.1.2.1) family. As to quaternary structure, the complex is composed of an ATP-binding protein (RbsA), two transmembrane proteins (RbsC) and a solute-binding protein (RbsB).

It is found in the cell inner membrane. It carries out the reaction D-ribose(out) + ATP + H2O = D-ribose(in) + ADP + phosphate + H(+). Its function is as follows. Part of the ABC transporter complex RbsABC involved in ribose import. Responsible for energy coupling to the transport system. The sequence is that of Ribose import ATP-binding protein RbsA 1 from Rhizobium etli (strain ATCC 51251 / DSM 11541 / JCM 21823 / NBRC 15573 / CFN 42).